A 140-amino-acid chain; its full sequence is Large ribosomal subunit protein bL17 (140 aa).

The protein belongs to the bacterial ribosomal protein bL17 family. In terms of assembly, part of the 50S ribosomal subunit. Contacts protein L32.

This is Large ribosomal subunit protein bL17 from Hyphomonas neptunium (strain ATCC 15444).